The sequence spans 547 residues: TBCC domain-containing protein 1 (547 aa).

In terms of domain architecture, C-CAP/cofactor C-like spans 304 to 435 (PHTHRMVVMS…LEDHMAQTGL (132 aa)).

The protein belongs to the TBCC family.

Its subcellular location is the cytoplasm. It localises to the cytoskeleton. It is found in the microtubule organizing center. The protein resides in the centrosome. The protein localises to the spindle pole. May play a role in the regulation of centrosome and Golgi apparatus positioning. In Xenopus laevis (African clawed frog), this protein is TBCC domain-containing protein 1 (tbccd1).